A 273-amino-acid polypeptide reads, in one-letter code: Putative phosphoenolpyruvate synthase regulatory protein (273 aa).

154-161 provides a ligand contact to ADP; that stretch reads GVSRSGKT.

Belongs to the pyruvate, phosphate/water dikinase regulatory protein family. PSRP subfamily.

It carries out the reaction [pyruvate, water dikinase] + ADP = [pyruvate, water dikinase]-phosphate + AMP + H(+). It catalyses the reaction [pyruvate, water dikinase]-phosphate + phosphate + H(+) = [pyruvate, water dikinase] + diphosphate. Its function is as follows. Bifunctional serine/threonine kinase and phosphorylase involved in the regulation of the phosphoenolpyruvate synthase (PEPS) by catalyzing its phosphorylation/dephosphorylation. The protein is Putative phosphoenolpyruvate synthase regulatory protein of Neisseria meningitidis serogroup B (strain ATCC BAA-335 / MC58).